Reading from the N-terminus, the 557-residue chain is Dihydroxy-acid dehydratase 1 (557 aa).

Position 50 (Cys50) interacts with [2Fe-2S] cluster. Asp82 is a Mg(2+) binding site. Cys123 serves as a coordination point for [2Fe-2S] cluster. Mg(2+) is bound by residues Asp124 and Lys125. N6-carboxylysine is present on Lys125. [2Fe-2S] cluster is bound at residue Cys195. Glu447 is a Mg(2+) binding site. Ser473 (proton acceptor) is an active-site residue.

The protein belongs to the IlvD/Edd family. In terms of assembly, homodimer. [2Fe-2S] cluster is required as a cofactor. Requires Mg(2+) as cofactor.

It carries out the reaction (2R)-2,3-dihydroxy-3-methylbutanoate = 3-methyl-2-oxobutanoate + H2O. The enzyme catalyses (2R,3R)-2,3-dihydroxy-3-methylpentanoate = (S)-3-methyl-2-oxopentanoate + H2O. The protein operates within amino-acid biosynthesis; L-isoleucine biosynthesis; L-isoleucine from 2-oxobutanoate: step 3/4. It participates in amino-acid biosynthesis; L-valine biosynthesis; L-valine from pyruvate: step 3/4. Its function is as follows. Functions in the biosynthesis of branched-chain amino acids. Catalyzes the dehydration of (2R,3R)-2,3-dihydroxy-3-methylpentanoate (2,3-dihydroxy-3-methylvalerate) into 2-oxo-3-methylpentanoate (2-oxo-3-methylvalerate) and of (2R)-2,3-dihydroxy-3-methylbutanoate (2,3-dihydroxyisovalerate) into 2-oxo-3-methylbutanoate (2-oxoisovalerate), the penultimate precursor to L-isoleucine and L-valine, respectively. This is Dihydroxy-acid dehydratase 1 from Cupriavidus pinatubonensis (strain JMP 134 / LMG 1197) (Cupriavidus necator (strain JMP 134)).